A 428-amino-acid chain; its full sequence is 26S proteasome regulatory subunit 6B homolog (428 aa).

Position 1 is an N-acetylmethionine (M1). 213–220 (GPPGTGKT) is a binding site for ATP. K280 participates in a covalent cross-link: Glycyl lysine isopeptide (Lys-Gly) (interchain with G-Cter in ubiquitin).

The protein belongs to the AAA ATPase family. Post-translationally, N-acetylated by NAT3.

Its subcellular location is the cytoplasm. The protein resides in the nucleus. The 26S proteasome is involved in the ATP-dependent degradation of ubiquitinated proteins. The regulatory (or ATPase) complex confers ATP dependency and substrate specificity to the 26S complex. The protein is 26S proteasome regulatory subunit 6B homolog (RPT3) of Saccharomyces cerevisiae (strain ATCC 204508 / S288c) (Baker's yeast).